Reading from the N-terminus, the 858-residue chain is Potassium transporter 7 (858 aa).

Composition is skewed to acidic residues over residues 1 to 16 (MAEESSMEGSEKEEID) and 38 to 53 (QDDDDSEIGVDDDNDG). The interval 1–68 (MAEESSMEGS…LESDEDEIPE (68 aa)) is disordered. Residues 1–104 (MAEESSMEGS…DYEDLTVGRK (104 aa)) are Cytoplasmic-facing. A helical membrane pass occupies residues 105–125 (VLLAFQTLGVVFGDVGTSPLY). The Extracellular segment spans residues 126–147 (TFSVMFSKSPVQEKEDVIGALS). A helical membrane pass occupies residues 148-168 (LVLYTLLLVPLIKYVLVVLWA). At 169–232 (NDDGEGGTFA…KLENSLILKK (64 aa)) the chain is on the cytoplasmic side. The chain crosses the membrane as a helical span at residues 233-253 (ILLVLVLAGTSMVIADGVVTP). Topologically, residues 254–269 (AMSVMSAVGGLKVGVD) are extracellular. A helical membrane pass occupies residues 270-290 (VVEQDQVVMISVAFLVILFSL). Over 291-297 (QKYGTSK) the chain is Cytoplasmic. The helical transmembrane segment at 298 to 318 (MGLVVGPALLIWFCSLAGIGI) threads the bilayer. The Extracellular portion of the chain corresponds to 319–345 (YNLIKYDSSVYRAFNPVHIYYFFKRNS). The chain crosses the membrane as a helical span at residues 346-366 (INAWYALGGCILCATGSEALF). The Cytoplasmic segment spans residues 367–380 (ADLCYFSVRSVQLT). Residues 381–401 (FVCLVLPCLMLGYMGQAAYLM) traverse the membrane as a helical segment. Over 402-413 (ENHADASQAFFS) the chain is Extracellular. The helical transmembrane segment at 414–434 (SVPGSAFWPVLFIANIAALIA) threads the bilayer. Residues 435–470 (SRTMTTATFSCIKQSTALGCFPRLKIIHTSRKFMGQ) lie on the Cytoplasmic side of the membrane. The helical transmembrane segment at 471-491 (IYIPVLNWFLLAVCLVVVCSI) threads the bilayer. Residues 492 to 496 (SSIDE) lie on the Extracellular side of the membrane. A helical membrane pass occupies residues 497 to 517 (IGNAYGMAELGVMMTTTILVT). A topological domain (cytoplasmic) is located at residue L518. A helical transmembrane segment spans residues 519–539 (IMLLIWQINIVIVIAFLVVFL). At 540 to 552 (GVELVFFSSVIAS) the chain is on the extracellular side. Residues 553 to 573 (VGDGSWIILVFAVIMFGIMYI) traverse the membrane as a helical segment. At 574–858 (WNYGSKLRYE…LMQVGMTYMV (285 aa)) the chain is on the cytoplasmic side. The interval 707–731 (QERSLESDGNDDSDSEEDFPGSRVV) is disordered. The segment covering 714–725 (DGNDDSDSEEDF) has biased composition (acidic residues). 2 positions are modified to phosphoserine: S719 and S721.

This sequence belongs to the HAK/KUP transporter (TC 2.A.72.3) family.

Its subcellular location is the cell membrane. Its function is as follows. Probable potassium transporter. The sequence is that of Potassium transporter 7 (POT7) from Arabidopsis thaliana (Mouse-ear cress).